A 158-amino-acid polypeptide reads, in one-letter code: Probable cyclic pyranopterin monophosphate synthase (158 aa).

Substrate is bound by residues 75–77 (MCH) and 111–112 (ME). The active site involves aspartate 126.

It belongs to the MoaC family. In terms of assembly, homohexamer; trimer of dimers.

It catalyses the reaction (8S)-3',8-cyclo-7,8-dihydroguanosine 5'-triphosphate = cyclic pyranopterin phosphate + diphosphate. The protein operates within cofactor biosynthesis; molybdopterin biosynthesis. Functionally, catalyzes the conversion of (8S)-3',8-cyclo-7,8-dihydroguanosine 5'-triphosphate to cyclic pyranopterin monophosphate (cPMP). The protein is Probable cyclic pyranopterin monophosphate synthase of Methanocorpusculum labreanum (strain ATCC 43576 / DSM 4855 / Z).